We begin with the raw amino-acid sequence, 131 residues long: Rhodopsin (131 aa).

The Extracellular segment spans residues 1–16; that stretch reads CGIDYYTRAPGYNNES. N-linked (GlcNAc...) asparagine glycosylation occurs at N14. A helical membrane pass occupies residues 17–38; the sequence is FVIYMFIVHFLIPLFIISFCYG. Topologically, residues 39–66 are cytoplasmic; it reads NLLCAVKAAAAAQEESETTQRAEREVTR. The chain crosses the membrane as a helical span at residues 67-88; that stretch reads MVIMMVISYLVSWVPYASVAWY. The Extracellular segment spans residues 89–100; sequence IFSNQGSEFGPV. The helical transmembrane segment at 101-122 threads the bilayer; it reads FMTIPAFFAKSSALYNPLIYVL. K110 bears the N6-(retinylidene)lysine mark. Residues 123-131 are Cytoplasmic-facing; that stretch reads MNKQFRHCM.

Belongs to the G-protein coupled receptor 1 family. Opsin subfamily. In terms of processing, phosphorylated on some or all of the serine and threonine residues present in the C-terminal region. Post-translationally, contains one covalently linked retinal chromophore.

It is found in the membrane. Its subcellular location is the cell projection. The protein localises to the cilium. The protein resides in the photoreceptor outer segment. Photoreceptor required for image-forming vision at low light intensity. While most salt water fish species use retinal as chromophore, most freshwater fish use 3-dehydroretinal, or a mixture of retinal and 3-dehydroretinal. Light-induced isomerization of 11-cis to all-trans retinal triggers a conformational change that activates signaling via G-proteins. Subsequent receptor phosphorylation mediates displacement of the bound G-protein alpha subunit by arrestin and terminates signaling. The chain is Rhodopsin (rho) from Coregonus autumnalis (Arctic cisco).